Reading from the N-terminus, the 161-residue chain is S-ribosylhomocysteine lyase (161 aa).

Residues H57, H61, and C124 each contribute to the Fe cation site.

Belongs to the LuxS family. In terms of assembly, homodimer. Fe cation serves as cofactor.

The catalysed reaction is S-(5-deoxy-D-ribos-5-yl)-L-homocysteine = (S)-4,5-dihydroxypentane-2,3-dione + L-homocysteine. In terms of biological role, involved in the synthesis of autoinducer 2 (AI-2) which is secreted by bacteria and is used to communicate both the cell density and the metabolic potential of the environment. The regulation of gene expression in response to changes in cell density is called quorum sensing. Catalyzes the transformation of S-ribosylhomocysteine (RHC) to homocysteine (HC) and 4,5-dihydroxy-2,3-pentadione (DPD). The protein is S-ribosylhomocysteine lyase of Macrococcus caseolyticus (strain JCSC5402) (Macrococcoides caseolyticum).